Consider the following 1057-residue polypeptide: Carbamoyl phosphate synthase large chain (1057 aa).

The tract at residues 1 to 401 is carboxyphosphate synthetic domain; that stretch reads MPKRQDIETI…SLLKAIRSLE (401 aa). The ATP site is built by Arg-129, Arg-169, Gly-175, Gly-176, Lys-208, Ile-210, Glu-215, Gly-241, Ile-242, His-243, Gln-284, and Glu-298. An ATP-grasp 1 domain is found at 133-327; that stretch reads RTLMNDLGVP…IAKLAAKIAI (195 aa). Mg(2+) is bound by residues Gln-284, Glu-298, and Asn-300. The Mn(2+) site is built by Gln-284, Glu-298, and Asn-300. The tract at residues 402–546 is oligomerization domain; it reads YGVHHLGLPN…YGTYEYENES (145 aa). The segment at 547–929 is carbamoyl phosphate synthetic domain; it reads VVTEKEKILV…ALFKGLTASG (383 aa). The region spanning 671–861 is the ATP-grasp 2 domain; sequence EALLHTIDVP…MAQLAMRAII (191 aa). ATP is bound by residues Arg-707, Arg-746, Leu-748, Glu-752, Gly-777, Val-778, His-779, Ser-780, Gln-820, and Glu-832. Gln-820, Glu-832, and Asn-834 together coordinate Mg(2+). Residues Gln-820, Glu-832, and Asn-834 each coordinate Mn(2+). The MGS-like domain occupies 930-1057; the sequence is MEVKDHGTVL…ESMTFTMKNM (128 aa). The segment at 930–1057 is allosteric domain; the sequence is MEVKDHGTVL…ESMTFTMKNM (128 aa).

The protein belongs to the CarB family. In terms of assembly, composed of two chains; the small (or glutamine) chain promotes the hydrolysis of glutamine to ammonia, which is used by the large (or ammonia) chain to synthesize carbamoyl phosphate. Tetramer of heterodimers (alpha,beta)4. Mg(2+) is required as a cofactor. It depends on Mn(2+) as a cofactor.

The enzyme catalyses hydrogencarbonate + L-glutamine + 2 ATP + H2O = carbamoyl phosphate + L-glutamate + 2 ADP + phosphate + 2 H(+). It carries out the reaction hydrogencarbonate + NH4(+) + 2 ATP = carbamoyl phosphate + 2 ADP + phosphate + 2 H(+). It functions in the pathway amino-acid biosynthesis; L-arginine biosynthesis; carbamoyl phosphate from bicarbonate: step 1/1. Its pathway is pyrimidine metabolism; UMP biosynthesis via de novo pathway; (S)-dihydroorotate from bicarbonate: step 1/3. Large subunit of the glutamine-dependent carbamoyl phosphate synthetase (CPSase). CPSase catalyzes the formation of carbamoyl phosphate from the ammonia moiety of glutamine, carbonate, and phosphate donated by ATP, constituting the first step of 2 biosynthetic pathways, one leading to arginine and/or urea and the other to pyrimidine nucleotides. The large subunit (synthetase) binds the substrates ammonia (free or transferred from glutamine from the small subunit), hydrogencarbonate and ATP and carries out an ATP-coupled ligase reaction, activating hydrogencarbonate by forming carboxy phosphate which reacts with ammonia to form carbamoyl phosphate. This is Carbamoyl phosphate synthase large chain from Staphylococcus saprophyticus subsp. saprophyticus (strain ATCC 15305 / DSM 20229 / NCIMB 8711 / NCTC 7292 / S-41).